The following is a 241-amino-acid chain: MRIPLLAPDNYAFPDPAYALARCDGLVGVSGDLDAGRLLEAYRNGVFPWFSRDGWFFWYAVGPRAVVFPDRLHIPRSLAKTLRNGSYRVAVNGCFAEVVAHCAAAARPNQDGTWIAPEFQTAYLKLHEMGYAHSFECHYPDESGETRLAGGFYGVQIGRVFYGESMFALQPDASKIAFACAVPFLADLGVELIDCQQDTEHMRRFGSELLPFADFAERLRMLNAVPLKEEIGRREVACKGL.

Belongs to the L/F-transferase family.

The protein localises to the cytoplasm. It catalyses the reaction N-terminal L-lysyl-[protein] + L-leucyl-tRNA(Leu) = N-terminal L-leucyl-L-lysyl-[protein] + tRNA(Leu) + H(+). The enzyme catalyses N-terminal L-arginyl-[protein] + L-leucyl-tRNA(Leu) = N-terminal L-leucyl-L-arginyl-[protein] + tRNA(Leu) + H(+). The catalysed reaction is L-phenylalanyl-tRNA(Phe) + an N-terminal L-alpha-aminoacyl-[protein] = an N-terminal L-phenylalanyl-L-alpha-aminoacyl-[protein] + tRNA(Phe). Functions in the N-end rule pathway of protein degradation where it conjugates Leu, Phe and, less efficiently, Met from aminoacyl-tRNAs to the N-termini of proteins containing an N-terminal arginine or lysine. The protein is Leucyl/phenylalanyl-tRNA--protein transferase of Neisseria meningitidis serogroup B (strain ATCC BAA-335 / MC58).